The primary structure comprises 445 residues: Argininosuccinate synthase (445 aa).

Residues 17–25 and Ala-43 contribute to the ATP site; that span reads AFSGGLDTS. Tyr-99 contacts L-citrulline. 2 residues coordinate ATP: Gly-129 and Thr-131. L-aspartate is bound by residues Thr-131, Asn-135, and Asp-136. Position 135 (Asn-135) interacts with L-citrulline. Asp-136 lines the ATP pocket. Arg-139 and Ser-192 together coordinate L-citrulline. Asp-194 lines the ATP pocket. L-citrulline-binding residues include Thr-201, Glu-203, and Glu-280.

The protein belongs to the argininosuccinate synthase family. Type 2 subfamily. Homotetramer.

Its subcellular location is the cytoplasm. The catalysed reaction is L-citrulline + L-aspartate + ATP = 2-(N(omega)-L-arginino)succinate + AMP + diphosphate + H(+). It participates in amino-acid biosynthesis; L-arginine biosynthesis; L-arginine from L-ornithine and carbamoyl phosphate: step 2/3. This is Argininosuccinate synthase from Burkholderia cenocepacia (strain ATCC BAA-245 / DSM 16553 / LMG 16656 / NCTC 13227 / J2315 / CF5610) (Burkholderia cepacia (strain J2315)).